The following is a 95-amino-acid chain: Putative pterin-4-alpha-carbinolamine dehydratase (95 aa).

It belongs to the pterin-4-alpha-carbinolamine dehydratase family.

The enzyme catalyses (4aS,6R)-4a-hydroxy-L-erythro-5,6,7,8-tetrahydrobiopterin = (6R)-L-erythro-6,7-dihydrobiopterin + H2O. The sequence is that of Putative pterin-4-alpha-carbinolamine dehydratase from Nocardia farcinica (strain IFM 10152).